The following is a 525-amino-acid chain: Glucans biosynthesis protein G (525 aa).

The N-terminal stretch at 1–35 (MIFRSVSNTDFRARVRTLLLAGSTALAFVAAPVWA) is a signal peptide.

Belongs to the OpgD/OpgG family.

The protein localises to the periplasm. It participates in glycan metabolism; osmoregulated periplasmic glucan (OPG) biosynthesis. Functionally, involved in the biosynthesis of osmoregulated periplasmic glucans (OPGs). The polypeptide is Glucans biosynthesis protein G (Pseudomonas paraeruginosa (strain DSM 24068 / PA7) (Pseudomonas aeruginosa (strain PA7))).